A 354-amino-acid polypeptide reads, in one-letter code: Gibberellin receptor GID1 (354 aa).

The Involved in the stabilization of the negatively charged intermediate by the formation of the oxyanion hole signature appears at 120–122; that stretch reads HGG. Gibberellin A3 contacts are provided by residues 122 to 123, Tyr-134, Ser-198, and Asp-250; that span reads GS. Residues 122–123, Tyr-134, and Ser-198 contribute to the gibberellin A4 site; that span reads GS. The active site involves Ser-198. Asp-296 is a catalytic residue. Gibberellin A3 is bound at residue Gly-327. Residue Gly-327 coordinates gibberellin A4.

The protein belongs to the 'GDXG' lipolytic enzyme family. In terms of assembly, interacts with the DELLA protein SLR1 in a GA-dependent manner, resulting in subsequent SLR1 degradation.

The protein resides in the nucleus. Functions as a soluble gibberellin (GA) receptor. GA is an essential hormone that regulates growth and development in plants. Binds with high affinity the biologically active GAs such as GA1, GA3 and GA4, but has low or no affinity for the biologically inactive GAs. Upon GA-binding, it interacts with the DELLA protein SLR1, a repressor of GA signaling. This leads to SLR1 degradation by the proteasome, allowing the GA signaling pathway. This chain is Gibberellin receptor GID1, found in Oryza sativa subsp. japonica (Rice).